The primary structure comprises 364 residues: Histidinol-phosphate aminotransferase BQ2027_MB2256C (364 aa).

Residue K220 is modified to N6-(pyridoxal phosphate)lysine.

This sequence belongs to the class-I pyridoxal-phosphate-dependent aminotransferase family. In terms of assembly, monomer. Requires pyridoxal 5'-phosphate as cofactor.

The protein localises to the secreted. It is found in the cell wall. It carries out the reaction L-histidinol phosphate + 2-oxoglutarate = 3-(imidazol-4-yl)-2-oxopropyl phosphate + L-glutamate. Aminotransferase that catalyzes the conversion of histidinol phosphate and 2-oxoglutarate into L-glutamate and imidazole acetol phosphate. Might play a significant role in mediating histidine biosynthesis during infection. Facilitates mycobacterial survival and virulence in macrophages. The chain is Histidinol-phosphate aminotransferase BQ2027_MB2256C from Mycobacterium bovis (strain ATCC BAA-935 / AF2122/97).